We begin with the raw amino-acid sequence, 197 residues long: uncharacterized protein (197 aa).

A helical membrane pass occupies residues 11-31 (ICGFSLVALTIAGIVGGVYLV).

The protein resides in the membrane. This is an uncharacterized protein from Mycoplasma pneumoniae (strain ATCC 29342 / M129 / Subtype 1) (Mycoplasmoides pneumoniae).